A 552-amino-acid polypeptide reads, in one-letter code: HTH-type transcriptional regulator SgrR (552 aa).

The solute-binding stretch occupies residues Glu163 to Trp493.

In terms of biological role, activates the small RNA gene sgrS under glucose-phosphate stress conditions as well as yfdZ. Represses its own transcription under both stress and non-stress conditions. Might act as a sensor of the intracellular accumulation of phosphoglucose by binding these molecules in its C-terminal solute-binding domain. In Pectobacterium atrosepticum (strain SCRI 1043 / ATCC BAA-672) (Erwinia carotovora subsp. atroseptica), this protein is HTH-type transcriptional regulator SgrR.